The following is a 291-amino-acid chain: Beta-lactamase OXY-1 (291 aa).

Residues 1-24 (MLKSSWRKTALMAAAAVPLLLASG) form the signal peptide. The active-site Acyl-ester intermediate is S73. Residue 237–239 (KTG) participates in substrate binding.

It belongs to the class-A beta-lactamase family.

It carries out the reaction a beta-lactam + H2O = a substituted beta-amino acid. Functionally, hydrolyzes broad-spectrum beta-lactam antibiotics. Active against cephalosporins. In Klebsiella oxytoca, this protein is Beta-lactamase OXY-1 (bla).